A 410-amino-acid chain; its full sequence is Extracellular serine proteinase (410 aa).

The N-terminal stretch at Met-1 to Ser-19 is a signal peptide. A propeptide spanning residues Ser-20 to Phe-132 is cleaved from the precursor. In terms of domain architecture, Inhibitor I9 spans Tyr-45–Arg-130. The 272-residue stretch at Thr-139–Phe-410 folds into the Peptidase S8 domain. Catalysis depends on charge relay system residues Asp-171, His-204, and Ser-356.

Belongs to the peptidase S8 family. In terms of processing, contains 4 Cys residues that form two disulfide bonds. Glycosylated. This proteinase has a 0.7% carbohydrate content.

It is found in the secreted. In terms of biological role, serine proteinase with preferred activity for amino acids with aromatic side groups at the P1' side of the scissible bond. This is Extracellular serine proteinase from Thermus sp. (strain Rt41A).